Reading from the N-terminus, the 308-residue chain is Ava biosynthesis cluster protein O (308 aa).

It functions in the pathway secondary metabolite biosynthesis. Part of the cluster that mediates the biosynthesis of a highly modified cyclo-arginine-tryptophan dipeptide (cRW). The first step of the pathway is perfornmed by the arginine-containing cyclodipeptide synthase (RCPDS) avaA that acts as the scaffold-generating enzyme and is responsible for formation of the cyclo-Arg-Trp (cRW) diketopiperazine. AvaB then acts as a multifunctional flavoenzyme that is responsible for generating the cyclo-Arg-formylkynurenine DKP, which can be deformylated by avaC. AvaB then further catalyzes an additional N-oxidation followed by cyclization and dehydration. The next step is an N-acetylation of the guanidine group catalyzed by the arginine N-acetyltransferase avaD. The roles of the additional enzymes identified within the ava cluster still have to be determined. The chain is Ava biosynthesis cluster protein O from Aspergillus versicolor.